Reading from the N-terminus, the 201-residue chain is Elongation factor Ts (201 aa).

Positions 81–84 (TDFV) are involved in Mg(2+) ion dislocation from EF-Tu.

It belongs to the EF-Ts family.

The protein resides in the cytoplasm. In terms of biological role, associates with the EF-Tu.GDP complex and induces the exchange of GDP to GTP. It remains bound to the aminoacyl-tRNA.EF-Tu.GTP complex up to the GTP hydrolysis stage on the ribosome. The protein is Elongation factor Ts of Syntrophus aciditrophicus (strain SB).